A 151-amino-acid chain; its full sequence is UPF0178 protein YaiI (151 aa).

It belongs to the UPF0178 family.

The polypeptide is UPF0178 protein YaiI (Salmonella paratyphi B (strain ATCC BAA-1250 / SPB7)).